Reading from the N-terminus, the 915-residue chain is DNA (cytosine-5)-methyltransferase 3 (915 aa).

A compositionally biased stretch (low complexity) spans 1–14; the sequence is MAPSSPSSARPTRA. Disordered regions lie at residues 1-107 and 152-171; these read MAPS…AEEQ and HSNW…PEED. Over residues 21–30 the composition is skewed to basic and acidic residues; it reads AMAEEIHQNQ. Over residues 42–57 the composition is skewed to basic residues; sequence AKRRRKAASSGKKPKP. Residues 71 to 80 show a composition bias toward basic and acidic residues; it reads KKGETEKTEP. A compositionally biased stretch (acidic residues) spans 81–107; that stretch reads VVDDVCAEEPDEEELAMGEEEAEAEEQ. A BAH domain is found at 188–313; the sequence is IVYCLGDDVY…VAYSTFANIS (126 aa). A compositionally biased stretch (polar residues) spans 315-328; it reads ENGQSGSETASGIS. The segment at 315 to 338 is disordered; it reads ENGQSGSETASGISSDDAGLETSS. The SAM-dependent MTase C5-type domain maps to 345–876; it reads ATLLDLYSGC…YCLGQAYLGE (532 aa). One can recognise a Chromo domain in the interval 445–508; sequence FVVQKLIGIR…EGRKRKILPL (64 aa). The active site involves C521.

This sequence belongs to the class I-like SAM-binding methyltransferase superfamily. C5-methyltransferase family.

The protein localises to the nucleus. It catalyses the reaction a 2'-deoxycytidine in DNA + S-adenosyl-L-methionine = a 5-methyl-2'-deoxycytidine in DNA + S-adenosyl-L-homocysteine + H(+). Functionally, may be involved in the CpXpG methylation and in gene silencing. In Zea mays (Maize), this protein is DNA (cytosine-5)-methyltransferase 3 (DMT105).